The primary structure comprises 294 residues: Indole-3-glycerol phosphate synthase (294 aa).

Belongs to the TrpC family.

It catalyses the reaction 1-(2-carboxyphenylamino)-1-deoxy-D-ribulose 5-phosphate + H(+) = (1S,2R)-1-C-(indol-3-yl)glycerol 3-phosphate + CO2 + H2O. Its pathway is amino-acid biosynthesis; L-tryptophan biosynthesis; L-tryptophan from chorismate: step 4/5. This chain is Indole-3-glycerol phosphate synthase, found in Synechococcus sp. (strain WH7803).